Here is a 166-residue protein sequence, read N- to C-terminus: Regulatory protein RecX (166 aa).

The protein belongs to the RecX family.

It localises to the cytoplasm. Modulates RecA activity. The sequence is that of Regulatory protein RecX from Escherichia coli (strain SMS-3-5 / SECEC).